We begin with the raw amino-acid sequence, 227 residues long: ATP synthase F(0) complex subunit a (227 aa).

Transmembrane regions (helical) follow at residues 14–34 (FLGI…FPSP), 69–89 (WAMI…LGLL), 98–118 (QLSM…LIGM), 139–159 (IPIL…ALGV), 165–185 (LTAG…MLSI), and 189–209 (IATL…AVAM).

This sequence belongs to the ATPase A chain family. As to quaternary structure, component of the ATP synthase complex composed at least of ATP5F1A/subunit alpha, ATP5F1B/subunit beta, ATP5MC1/subunit c (homooctomer), MT-ATP6/subunit a, MT-ATP8/subunit 8, ATP5ME/subunit e, ATP5MF/subunit f, ATP5MG/subunit g, ATP5MK/subunit k, ATP5MJ/subunit j, ATP5F1C/subunit gamma, ATP5F1D/subunit delta, ATP5F1E/subunit epsilon, ATP5PF/subunit F6, ATP5PB/subunit b, ATP5PD/subunit d, ATP5PO/subunit OSCP. ATP synthase complex consists of a soluble F(1) head domain (subunits alpha(3) and beta(3)) - the catalytic core - and a membrane F(0) domain - the membrane proton channel (subunits c, a, 8, e, f, g, k and j). These two domains are linked by a central stalk (subunits gamma, delta, and epsilon) rotating inside the F1 region and a stationary peripheral stalk (subunits F6, b, d, and OSCP). Interacts with DNAJC30; interaction is direct.

Its subcellular location is the mitochondrion inner membrane. The catalysed reaction is H(+)(in) = H(+)(out). In terms of biological role, subunit a, of the mitochondrial membrane ATP synthase complex (F(1)F(0) ATP synthase or Complex V) that produces ATP from ADP in the presence of a proton gradient across the membrane which is generated by electron transport complexes of the respiratory chain. ATP synthase complex consist of a soluble F(1) head domain - the catalytic core - and a membrane F(1) domain - the membrane proton channel. These two domains are linked by a central stalk rotating inside the F(1) region and a stationary peripheral stalk. During catalysis, ATP synthesis in the catalytic domain of F(1) is coupled via a rotary mechanism of the central stalk subunits to proton translocation. With the subunit c (ATP5MC1), forms the proton-conducting channel in the F(0) domain, that contains two crucial half-channels (inlet and outlet) that facilitate proton movement from the mitochondrial intermembrane space (IMS) into the matrix. Protons are taken up via the inlet half-channel and released through the outlet half-channel, following a Grotthuss mechanism. This is ATP synthase F(0) complex subunit a from Polypterus ornatipinnis (Ornate bichir).